The primary structure comprises 282 residues: Bis(5'-nucleosyl)-tetraphosphatase, symmetrical (282 aa).

It belongs to the Ap4A hydrolase family.

The enzyme catalyses P(1),P(4)-bis(5'-adenosyl) tetraphosphate + H2O = 2 ADP + 2 H(+). In terms of biological role, hydrolyzes diadenosine 5',5'''-P1,P4-tetraphosphate to yield ADP. In Escherichia coli O7:K1 (strain IAI39 / ExPEC), this protein is Bis(5'-nucleosyl)-tetraphosphatase, symmetrical.